Here is a 619-residue protein sequence, read N- to C-terminus: Guanylate cyclase soluble subunit beta-1 (619 aa).

Histidine 105 lines the heme pocket. Positions 421–554 (TILFSGIVGF…NTVNLTSRTE (134 aa)) constitute a Guanylate cyclase domain.

This sequence belongs to the adenylyl cyclase class-4/guanylyl cyclase family. In terms of assembly, the active enzyme is formed by a heterodimer of an alpha and a beta subunit. Homotetramer; dimer of dimers (in vitro). Heterodimer with GUCY1A1. Can also form inactive homodimers in vitro. It depends on heme as a cofactor. As to expression, lung and brain.

It localises to the cytoplasm. The enzyme catalyses GTP = 3',5'-cyclic GMP + diphosphate. With respect to regulation, activated by nitric oxide in the presence of magnesium or manganese ions. In terms of biological role, mediates responses to nitric oxide (NO) by catalyzing the biosynthesis of the signaling molecule cGMP. The polypeptide is Guanylate cyclase soluble subunit beta-1 (Gucy1b1) (Rattus norvegicus (Rat)).